The following is an 840-amino-acid chain: Translation initiation factor IF-2 (840 aa).

The span at 95–143 (RSPDEIEAERQRELEEQRAAEEAERLKAEEAAARQRAEEEARKAEEAAR) shows a compositional bias: basic and acidic residues. Disordered regions lie at residues 95 to 155 (RSPD…ATAG) and 173 to 256 (PAAV…PTGP). Low complexity predominate over residues 144–155 (AKAAQEAAATAG). 2 stretches are compositionally biased toward basic and acidic residues: residues 175–191 (AVEERKKEEPRRVPKRD) and 223–232 (STDEESDGYR). The span at 233–247 (RGGRGGKSKLKKRNQ) shows a compositional bias: basic residues. The tr-type G domain occupies 340–509 (TRAPVVTVMG…LLQAEVLELK (170 aa)). The tract at residues 349–356 (GHVDHGKT) is G1. 349–356 (GHVDHGKT) is a GTP binding site. Positions 374–378 (GITQH) are G2. The tract at residues 395 to 398 (DTPG) is G3. GTP contacts are provided by residues 395 to 399 (DTPGH) and 449 to 452 (NKID). Positions 449–452 (NKID) are G4. The interval 485–487 (SAK) is G5.

This sequence belongs to the TRAFAC class translation factor GTPase superfamily. Classic translation factor GTPase family. IF-2 subfamily.

The protein localises to the cytoplasm. Functionally, one of the essential components for the initiation of protein synthesis. Protects formylmethionyl-tRNA from spontaneous hydrolysis and promotes its binding to the 30S ribosomal subunits. Also involved in the hydrolysis of GTP during the formation of the 70S ribosomal complex. The chain is Translation initiation factor IF-2 from Pseudomonas aeruginosa (strain ATCC 15692 / DSM 22644 / CIP 104116 / JCM 14847 / LMG 12228 / 1C / PRS 101 / PAO1).